Reading from the N-terminus, the 92-residue chain is Translation initiation factor IF-1 (92 aa).

Residues 1–72 form the S1-like domain; that stretch reads MAKEELIQFE…EKGRLIFRHK (72 aa). Positions 69–92 are disordered; it reads FRHKDERPGGPPRSGPPRGQFRRR.

It belongs to the IF-1 family. As to quaternary structure, component of the 30S ribosomal translation pre-initiation complex which assembles on the 30S ribosome in the order IF-2 and IF-3, IF-1 and N-formylmethionyl-tRNA(fMet); mRNA recruitment can occur at any time during PIC assembly.

It is found in the cytoplasm. In terms of biological role, one of the essential components for the initiation of protein synthesis. Stabilizes the binding of IF-2 and IF-3 on the 30S subunit to which N-formylmethionyl-tRNA(fMet) subsequently binds. Helps modulate mRNA selection, yielding the 30S pre-initiation complex (PIC). Upon addition of the 50S ribosomal subunit IF-1, IF-2 and IF-3 are released leaving the mature 70S translation initiation complex. The polypeptide is Translation initiation factor IF-1 (Rhodopseudomonas palustris (strain ATCC BAA-98 / CGA009)).